The sequence spans 296 residues: Light-independent protochlorophyllide reductase iron-sulfur ATP-binding protein (296 aa).

ATP is bound by residues 39-44 (GIGKST) and lysine 68. Serine 43 contacts Mg(2+). Residues cysteine 124 and cysteine 158 each coordinate [4Fe-4S] cluster. 209 to 210 (NR) serves as a coordination point for ATP.

This sequence belongs to the NifH/BchL/ChlL family. As to quaternary structure, homodimer. Protochlorophyllide reductase is composed of three subunits; ChlL, ChlN and ChlB. It depends on [4Fe-4S] cluster as a cofactor.

It carries out the reaction chlorophyllide a + oxidized 2[4Fe-4S]-[ferredoxin] + 2 ADP + 2 phosphate = protochlorophyllide a + reduced 2[4Fe-4S]-[ferredoxin] + 2 ATP + 2 H2O. Its pathway is porphyrin-containing compound metabolism; chlorophyll biosynthesis (light-independent). In terms of biological role, component of the dark-operative protochlorophyllide reductase (DPOR) that uses Mg-ATP and reduced ferredoxin to reduce ring D of protochlorophyllide (Pchlide) to form chlorophyllide a (Chlide). This reaction is light-independent. The L component serves as a unique electron donor to the NB-component of the complex, and binds Mg-ATP. The protein is Light-independent protochlorophyllide reductase iron-sulfur ATP-binding protein of Synechococcus sp. (strain WH7803).